Here is a 965-residue protein sequence, read N- to C-terminus: Aminopeptidase N (965 aa).

Topologically, residues 2-8 (AKGFYIS) are cytoplasmic. Residues 9-32 (KTLGILGILLGVAAVCTIIALSVV) form a helical; Signal-anchor for type II membrane protein membrane-spanning segment. The segment at 33–68 (YAQEKNRNAENSAIAPTLPGSTSATTSTTNPAIDES) is cytosolic Ser/Thr-rich junction. At 33 to 965 (YAQEKNRNAE…VVLKWFTENS (933 aa)) the chain is on the extracellular side. Positions 44-68 (SAIAPTLPGSTSATTSTTNPAIDES) are disordered. A compositionally biased stretch (low complexity) spans 47-64 (APTLPGSTSATTSTTNPA). A metalloprotease region spans residues 69 to 965 (KPWNQYRLPK…VVLKWFTENS (897 aa)). N114 and N128 each carry an N-linked (GlcNAc...) asparagine glycan. At Y176 the chain carries Sulfotyrosine. N-linked (GlcNAc...) asparagine glycans are attached at residues N234, N242, and N264. 351–355 (GAMEN) contributes to the substrate binding site. Residue H387 coordinates Zn(2+). E388 functions as the Proton acceptor in the catalytic mechanism. Zn(2+) is bound by residues H391 and E410. N-linked (GlcNAc...) asparagine glycosylation is found at N555, N606, and N624. An intrachain disulfide couples C760 to C767. N780 is a glycosylation site (N-linked (GlcNAc...) asparagine). The cysteines at positions 797 and 833 are disulfide-linked. At Y852 the chain carries Phosphotyrosine.

It belongs to the peptidase M1 family. Homodimer. Interacts with SLC6A19. Zn(2+) serves as cofactor. Sulfated. In terms of processing, N- and O-glycosylated. Post-translationally, may undergo proteolysis and give rise to a soluble form. In terms of tissue distribution, widely distributed throughout the CNS. Particularly abundant in kidney and intestinal microvilli, also detected in lung and liver. Weakly expressed in heart and aorta.

The protein resides in the cell membrane. The catalysed reaction is Release of an N-terminal amino acid, Xaa-|-Yaa- from a peptide, amide or arylamide. Xaa is preferably Ala, but may be most amino acids including Pro (slow action). When a terminal hydrophobic residue is followed by a prolyl residue, the two may be released as an intact Xaa-Pro dipeptide.. Broad specificity aminopeptidase which plays a role in the final digestion of peptides generated from hydrolysis of proteins by gastric and pancreatic proteases. Also involved in the processing of various peptides including peptide hormones, such as angiotensin III and IV, neuropeptides, and chemokines. May also be involved the cleavage of peptides bound to major histocompatibility complex class II molecules of antigen presenting cells. May have a role in angiogenesis and promote cholesterol crystallization. May have a role in amino acid transport by acting as binding partner of amino acid transporter SLC6A19 and regulating its activity. The polypeptide is Aminopeptidase N (Anpep) (Rattus norvegicus (Rat)).